The following is a 226-amino-acid chain: UPF0173 metal-dependent hydrolase SRU_1937 (226 aa).

It belongs to the UPF0173 family.

In Salinibacter ruber (strain DSM 13855 / M31), this protein is UPF0173 metal-dependent hydrolase SRU_1937.